The following is a 606-amino-acid chain: MVSDLKFAPSFQSFVDSSFFHELSRLKLDIFKLDSDEKALYTQLDLNQFTSNVLAISLRDDSFQKPDNDEHNIILKGYLLNFNTIELFKNCNKIQFIKEKGQELLQRGLENDLNEIISFYMISFADLKKYKFYYWICMPSFQSDGATYQIISSKVIASDSDISVSFIKQNVIIACVISGVIQKATPDNLKVCEKVVFKDFSHLKDIPSAVTKNILTVWSKLSPRETYTICFLRSDESSFEAEIIINNGNNPSLKVSGWEKNGLGKLAPKSIDLSSLMDPVKIADQAVDLNLKLMKWRIAPKIDLDGIRNTKALLLGSGTLGCYVSRVLLAWGVRHISFVDNSTVSFSNPVRQSLYNFEDCGKPKAQIASEALKRIFPSVESSGYQLEIPMIGHPVTNEKKQRQDYEALEDLIKSHDVIFLLMDARETRWLPSVLGRLHNKIVINAALGFDSYLVMRHGNDDDKLGCYFCNDILAPSDSLTDRTLDQMCTVTRPGVALLAASQAVELLVTYLQPTPNVLGTSPHQIRGFLNEFKTVSQSTPEYEHCCAGNKSVISALQENGWNFVRQALDDYKCVEKLSGLSKVQEEAELALEEDFDFSEDDEFVTG.

The short motif at 316-321 (GSGTLG) is the GXGXXG motif element. The active-site Glycyl thioester intermediate is the C488. Residues 567–606 (ALDDYKCVEKLSGLSKVQEEAELALEEDFDFSEDDEFVTG) are homodimerization.

The protein belongs to the ATG7 family. Homodimer. Interacts with ATG8 through a thioester bond between Cys-488 and the C-terminal Gly of ATG8 and with ATG12 through a thioester bond between Cys-488 and the C-terminal Gly of ATG12. Also interacts with ATG3.

The protein localises to the cytoplasm. It localises to the preautophagosomal structure. In terms of biological role, E1-like activating enzyme involved in the 2 ubiquitin-like systems required for cytoplasm to vacuole transport (Cvt) and autophagy. Activates ATG12 for its conjugation with ATG5 and ATG8 for its conjugation with phosphatidylethanolamine. Both systems are needed for the ATG8 association to Cvt vesicles and autophagosomes membranes. Autophagy is essential for maintenance of amino acid levels and protein synthesis under nitrogen starvation. Required for selective autophagic degradation of the nucleus (nucleophagy) as well as for mitophagy which contributes to regulate mitochondrial quantity and quality by eliminating the mitochondria to a basal level to fulfill cellular energy requirements and preventing excess ROS production. This Kluyveromyces marxianus (strain DMKU3-1042 / BCC 29191 / NBRC 104275) (Yeast) protein is Ubiquitin-like modifier-activating enzyme ATG7.